Reading from the N-terminus, the 299-residue chain is MFQPKPLVIVLIGPTASGKTELGIEIAKYFNLNIHNVDSRQLYRFMDIGTAKPTKEQQKTIKHFLIDLEEPSSQVNAKQFQEIATKSINRELNQNRIPFLIGGSGLYMNSIIKGFFAPNVPPQKVLRSQFEKLGQEKCWELLKICDPVLTKKINYADQVRTIRALEVFYVTGKPISSQKFQNPPPWKILELGLYREDLKERIFKRTKNMFEFGIIDETKKIINQYGSNLPLLETIGYREAKDVIKENLKLEKAIEITTTKTIQFAKRQKTWFRNKNNPIWLNNKNLLKDAIINIKHALR.

13-20 contacts ATP; sequence GPTASGKT. 15 to 20 lines the substrate pocket; the sequence is TASGKT. The segment at 38-41 is interaction with substrate tRNA; it reads DSRQ.

The protein belongs to the IPP transferase family. In terms of assembly, monomer. It depends on Mg(2+) as a cofactor.

The enzyme catalyses adenosine(37) in tRNA + dimethylallyl diphosphate = N(6)-dimethylallyladenosine(37) in tRNA + diphosphate. Its function is as follows. Catalyzes the transfer of a dimethylallyl group onto the adenine at position 37 in tRNAs that read codons beginning with uridine, leading to the formation of N6-(dimethylallyl)adenosine (i(6)A). This Prochlorococcus marinus subsp. pastoris (strain CCMP1986 / NIES-2087 / MED4) protein is tRNA dimethylallyltransferase.